Consider the following 313-residue polypeptide: Ribose-phosphate pyrophosphokinase (313 aa).

Residues 37–39 (DGE) and 96–97 (RQ) each bind ATP. Residues histidine 131 and aspartate 170 each coordinate Mg(2+). The active site involves lysine 193. D-ribose 5-phosphate is bound by residues arginine 195, aspartate 219, and 223-227 (DTAGT).

This sequence belongs to the ribose-phosphate pyrophosphokinase family. Class I subfamily. As to quaternary structure, homohexamer. It depends on Mg(2+) as a cofactor.

It localises to the cytoplasm. The catalysed reaction is D-ribose 5-phosphate + ATP = 5-phospho-alpha-D-ribose 1-diphosphate + AMP + H(+). It participates in metabolic intermediate biosynthesis; 5-phospho-alpha-D-ribose 1-diphosphate biosynthesis; 5-phospho-alpha-D-ribose 1-diphosphate from D-ribose 5-phosphate (route I): step 1/1. Involved in the biosynthesis of the central metabolite phospho-alpha-D-ribosyl-1-pyrophosphate (PRPP) via the transfer of pyrophosphoryl group from ATP to 1-hydroxyl of ribose-5-phosphate (Rib-5-P). This Pseudomonas putida (strain ATCC 47054 / DSM 6125 / CFBP 8728 / NCIMB 11950 / KT2440) protein is Ribose-phosphate pyrophosphokinase.